Here is a 376-residue protein sequence, read N- to C-terminus: Spermidine/putrescine import ATP-binding protein PotA (376 aa).

Residues 6 to 236 form the ABC transporter domain; the sequence is INIVNVNKSF…PADTFVADFL (231 aa). 38–45 lines the ATP pocket; it reads GPSGCGKT.

This sequence belongs to the ABC transporter superfamily. Spermidine/putrescine importer (TC 3.A.1.11.1) family. The complex is composed of two ATP-binding proteins (PotA), two transmembrane proteins (PotB and PotC) and a solute-binding protein (PotD).

Its subcellular location is the cell inner membrane. It catalyses the reaction ATP + H2O + polyamine-[polyamine-binding protein]Side 1 = ADP + phosphate + polyamineSide 2 + [polyamine-binding protein]Side 1.. Part of the ABC transporter complex PotABCD involved in spermidine/putrescine import. Responsible for energy coupling to the transport system. The protein is Spermidine/putrescine import ATP-binding protein PotA of Fusobacterium nucleatum subsp. nucleatum (strain ATCC 25586 / DSM 15643 / BCRC 10681 / CIP 101130 / JCM 8532 / KCTC 2640 / LMG 13131 / VPI 4355).